We begin with the raw amino-acid sequence, 622 residues long: Probable potassium transport system protein Kup (622 aa).

The next 12 membrane-spanning stretches (helical) occupy residues 9 to 29 (LPAV…TSPL), 52 to 72 (FLSL…LAFV), 101 to 121 (VLLV…VITP), 137 to 157 (PALT…LFVI), 169 to 189 (FGPV…ISIF), 213 to 233 (VAFF…ALYA), 247 to 267 (WFTV…ALIL), 287 to 309 (FPMV…SGVF), 337 to 357 (IYIP…VVTF), 363 to 383 (LAAA…ILAC), 396 to 416 (VVKI…LANV), and 419 to 439 (FFAG…VMAT).

This sequence belongs to the HAK/KUP transporter (TC 2.A.72) family.

The protein resides in the cell inner membrane. The enzyme catalyses K(+)(in) + H(+)(in) = K(+)(out) + H(+)(out). Functionally, transport of potassium into the cell. Likely operates as a K(+):H(+) symporter. The polypeptide is Probable potassium transport system protein Kup (Tolumonas auensis (strain DSM 9187 / NBRC 110442 / TA 4)).